The chain runs to 219 residues: Guanylate kinase (219 aa).

One can recognise a Guanylate kinase-like domain in the interval 15 to 194 (GLMFVLSSPS…AFESVKAILR (180 aa)). 22 to 29 (SPSGAGKT) is an ATP binding site.

It belongs to the guanylate kinase family.

It is found in the cytoplasm. It catalyses the reaction GMP + ATP = GDP + ADP. Functionally, essential for recycling GMP and indirectly, cGMP. This chain is Guanylate kinase, found in Rhodopseudomonas palustris (strain BisB5).